The following is a 116-amino-acid chain: MATQRAHRAETPAHPNRLWIWEKHVYLDEFRRSWLPVVIKSNEKFQVILRQEDVTLGEAMSPSQLVPYELPLMWQLYPKDRYRSCDSMYWQILYHIKFRDVEDMLLELIDSESNDE.

Belongs to the TCL1 family. As to quaternary structure, homodimer. Interacts with AKT1, AKT2 and AKT3 (via PH domain). Interacts with PNPT1; the interaction has no effect on PNPT1 exonuclease activity.

It localises to the cytoplasm. It is found in the nucleus. Its subcellular location is the microsome. The protein localises to the endoplasmic reticulum. Functionally, enhances the phosphorylation and activation of AKT1 and AKT2. Enhances cell proliferation, stabilizes mitochondrial membrane potential and promotes cell survival. This chain is T-cell leukemia/lymphoma protein 1A (Tcl1a), found in Mus musculus (Mouse).